The chain runs to 241 residues: MLSAYYNDPFLADFCLGNIPLRLASRQSSLAVLQAHECLRKLQIFFPRLWGQIITTTTQGDLDQETPLCAVENTGFFTDDVDFLVQSGQCDLGIHSAKDLPENPKATVVSITASIDPRDILVFHEKYLSIPLPRRLRIGSSSVRRKELLSLLYPSAIITDIRGTIQTRLKLLEEKNFDAIVMANAAVSRLGLRLPCTKILPPPYHPLQGRLAITASRHIRSWRGLFLTCGITEDVEIMCFS.

It belongs to the HMBS family.

The catalysed reaction is 4 porphobilinogen + H2O = hydroxymethylbilane + 4 NH4(+). The protein operates within porphyrin-containing compound metabolism; protoporphyrin-IX biosynthesis; coproporphyrinogen-III from 5-aminolevulinate: step 2/4. Its function is as follows. Tetrapolymerization of the monopyrrole PBG into the hydroxymethylbilane pre-uroporphyrinogen in several discrete steps. The chain is Probable porphobilinogen deaminase (hemC) from Chlamydia trachomatis serovar D (strain ATCC VR-885 / DSM 19411 / UW-3/Cx).